The primary structure comprises 46 residues: uncharacterized protein (46 aa).

The protein to equivalent protein in phage 82.

This is an uncharacterized protein from Escherichia coli (strain K12).